We begin with the raw amino-acid sequence, 173 residues long: Crossover junction endodeoxyribonuclease RuvC (173 aa).

Active-site residues include aspartate 8, glutamate 67, and aspartate 139. Mg(2+) contacts are provided by aspartate 8, glutamate 67, and aspartate 139.

The protein belongs to the RuvC family. As to quaternary structure, homodimer which binds Holliday junction (HJ) DNA. The HJ becomes 2-fold symmetrical on binding to RuvC with unstacked arms; it has a different conformation from HJ DNA in complex with RuvA. In the full resolvosome a probable DNA-RuvA(4)-RuvB(12)-RuvC(2) complex forms which resolves the HJ. The cofactor is Mg(2+).

It is found in the cytoplasm. The catalysed reaction is Endonucleolytic cleavage at a junction such as a reciprocal single-stranded crossover between two homologous DNA duplexes (Holliday junction).. The RuvA-RuvB-RuvC complex processes Holliday junction (HJ) DNA during genetic recombination and DNA repair. Endonuclease that resolves HJ intermediates. Cleaves cruciform DNA by making single-stranded nicks across the HJ at symmetrical positions within the homologous arms, yielding a 5'-phosphate and a 3'-hydroxyl group; requires a central core of homology in the junction. The consensus cleavage sequence is 5'-(A/T)TT(C/G)-3'. Cleavage occurs on the 3'-side of the TT dinucleotide at the point of strand exchange. HJ branch migration catalyzed by RuvA-RuvB allows RuvC to scan DNA until it finds its consensus sequence, where it cleaves and resolves the cruciform DNA. This chain is Crossover junction endodeoxyribonuclease RuvC, found in Salmonella dublin (strain CT_02021853).